Reading from the N-terminus, the 277-residue chain is Large ribosomal subunit protein uL2 (277 aa).

Disordered stretches follow at residues 32-58 (KSLT…RGGG) and 225-277 (VAMN…RRNK). Basic residues predominate over residues 258–277 (YKTRKKKRYSDKFIIKRRNK).

This sequence belongs to the universal ribosomal protein uL2 family. As to quaternary structure, part of the 50S ribosomal subunit. Forms a bridge to the 30S subunit in the 70S ribosome.

Its function is as follows. One of the primary rRNA binding proteins. Required for association of the 30S and 50S subunits to form the 70S ribosome, for tRNA binding and peptide bond formation. It has been suggested to have peptidyltransferase activity; this is somewhat controversial. Makes several contacts with the 16S rRNA in the 70S ribosome. The chain is Large ribosomal subunit protein uL2 from Borreliella burgdorferi (strain ATCC 35210 / DSM 4680 / CIP 102532 / B31) (Borrelia burgdorferi).